A 367-amino-acid chain; its full sequence is 3-dehydroquinate synthase (367 aa).

Residues 111-115 (GVVGD), 135-136 (TS), Lys148, Lys157, and 175-178 (TLDT) contribute to the NAD(+) site. Zn(2+)-binding residues include Glu190, His254, and His271.

This sequence belongs to the sugar phosphate cyclases superfamily. Dehydroquinate synthase family. Co(2+) is required as a cofactor. It depends on Zn(2+) as a cofactor. The cofactor is NAD(+).

Its subcellular location is the cytoplasm. The enzyme catalyses 7-phospho-2-dehydro-3-deoxy-D-arabino-heptonate = 3-dehydroquinate + phosphate. It functions in the pathway metabolic intermediate biosynthesis; chorismate biosynthesis; chorismate from D-erythrose 4-phosphate and phosphoenolpyruvate: step 2/7. Catalyzes the conversion of 3-deoxy-D-arabino-heptulosonate 7-phosphate (DAHP) to dehydroquinate (DHQ). The chain is 3-dehydroquinate synthase from Salinibacter ruber (strain DSM 13855 / M31).